The chain runs to 504 residues: MKEFKRYLELDRSQQHDFVYPLLFQEYIYVLAHDHGLNRSILLENADYDNKFSLLIVKRLITQMDQQNHLIFSPNDSNQNPFLGHNTNLYSQMILEGFAVVVEIPFSLRLISSLEGKETVKSHKLRSIHSIFPFLEDKFSRLNYVLDILIPHSIHLEILVQTLRYWVKDASSLHLLRFFLHEYRNWNTRITPKKSSFSFSKRNQRFFLFLYNFHVCESESIFVFLRNQSSHLRSISSGTFLERIYFYGKIEHFVKVFTKDFQDILWLFKDPFMHYVRYQGNSILASKGTSLLMNKWKYYLVNFWQCYFYMWCQPGRIQINQLSNHSLDFLGYLSSVRLNPSMVRSQMLENSFLIGNAIKKFDTIVPIIPLIGSLYKAKFCNVLGHPVSKPVWADLSDSDIIDRFGRIYRNLSHYHSGSLKKTSLYRIKYILRLSCARTLARKHKSTVRAFLKRLGSELLEEFFTEEEQVFYLTFQKTYSTSQGLSRGRIWYLDIICINDLANHE.

Belongs to the intron maturase 2 family. MatK subfamily.

It localises to the plastid. Its subcellular location is the chloroplast. In terms of biological role, usually encoded in the trnK tRNA gene intron. Probably assists in splicing its own and other chloroplast group II introns. In Actinidia chinensis (Kiwi), this protein is Maturase K.